Consider the following 711-residue polypeptide: Taperin (711 aa).

3 disordered regions span residues 134–305 (SRLL…APKP), 328–384 (RNSF…LGKS), and 414–438 (QRPS…GLRV). Residues 157–180 (PPPPPPPPAPPRPPPAAPSPPAAP) show a composition bias toward pro residues. A compositionally biased stretch (polar residues) spans 197–206 (LQKTGSNSFT). Serine 241 is modified (phosphoserine). Residues 267-282 (TPSATPASPPASATPS) are compositionally biased toward low complexity. Residues 283–296 (QRQCVSAATSTNDS) are compositionally biased toward polar residues. Serine 362, serine 418, and serine 463 each carry phosphoserine. 4 disordered regions span residues 500–535 (TFTV…EEAS), 572–630 (SRKK…EKPF), 642–662 (SVRP…SYTP), and 674–711 (QALE…ALYF). 2 stretches are compositionally biased toward polar residues: residues 512-521 (LQDQHFSQAN) and 581-590 (NDKSLQTTFE). A compositionally biased stretch (acidic residues) spans 597 to 624 (LEQEEEVDQQEEEEEEEEEEEEEEEGSG).

This sequence belongs to the taperin family. Interacts with GRXCR2; the interaction restricts TPRN to the stereocilum basal region. Interacts with actin ACTB; the interaction may stabilize stereocilia. Interacts with CLIC5. Interacts with PTPRQ. TPRN, CLIC5 and PTPQR form concentric rings at the base of stereocilia and may form a complex. Interacts with phosphatase PPP1CA; the interaction results in inhibition of PPC1A phosphatase activity. Interacts with DNA damage response proteins XRCC6/KU70, XRCC5/KU80, PARP1, TOP1 and TOP2A; these interactions recruit TPRN to sites of DNA damage where it may play a role in DNA repair. In terms of tissue distribution, expression is detected in fetal cochlea.

The protein localises to the cell projection. It localises to the stereocilium. The protein resides in the microvillus. It is found in the nucleus. Its subcellular location is the nucleoplasm. The protein localises to the cytoplasm. Functionally, essential for hearing. Required for maintenance of stereocilia on both inner and outer hair cells. Necessary for the integrity of the stereociliary rootlet. May act as an actin cytoskeleton regulator involved in the regulation of actin dynamics at the pointed end in hair cells. Forms rings at the base of stereocilia and binds actin filaments in the stereocilia which may stabilize the stereocilia. Acts as a strong inhibitor of PPP1CA phosphatase activity. Recruited to sites of DNA damage and may play a role in DNA damage repair. This Homo sapiens (Human) protein is Taperin (TPRN).